Consider the following 441-residue polypeptide: Glutamyl-tRNA reductase (441 aa).

Substrate contacts are provided by residues 64 to 67, Ser123, 128 to 130, and Gln134; these read TCNR and ETQ. Residue Cys65 is the Nucleophile of the active site. 203 to 208 provides a ligand contact to NADP(+); the sequence is GAGEMI.

Belongs to the glutamyl-tRNA reductase family. In terms of assembly, homodimer.

The enzyme catalyses (S)-4-amino-5-oxopentanoate + tRNA(Glu) + NADP(+) = L-glutamyl-tRNA(Glu) + NADPH + H(+). It functions in the pathway porphyrin-containing compound metabolism; protoporphyrin-IX biosynthesis; 5-aminolevulinate from L-glutamyl-tRNA(Glu): step 1/2. Functionally, catalyzes the NADPH-dependent reduction of glutamyl-tRNA(Glu) to glutamate 1-semialdehyde (GSA). The protein is Glutamyl-tRNA reductase of Burkholderia pseudomallei (strain K96243).